Reading from the N-terminus, the 137-residue chain is uncharacterized protein (137 aa).

The disordered stretch occupies residues 67-87 (KSERQHQRVHHELPHDKPRQS). A compositionally biased stretch (basic and acidic residues) spans 70 to 85 (RQHQRVHHELPHDKPR).

This is an uncharacterized protein from Human cytomegalovirus (strain AD169) (HHV-5).